Reading from the N-terminus, the 222-residue chain is CASP-like protein 1E1 (222 aa).

Residues 1–59 lie on the Cytoplasmic side of the membrane; it reads MEASRVKPGFNGVGMAAGSVNGSSRRPGPGLGYGYGYYMGSGAAAGGSGRAAQAPVDGC. The helical transmembrane segment at 60–80 threads the bilayer; sequence SVALRVFVVASTLVSAVVMGV. Topologically, residues 81–110 are extracellular; sequence DRQTRTIQITITDALPPLEVPLTANWSYSS. N-linked (GlcNAc...) asparagine glycosylation is present at asparagine 105. The helical transmembrane segment at 111–131 threads the bilayer; sequence AFVYFVVANAMVCLFSAAALA. The Cytoplasmic segment spans residues 132-146; that stretch reads ACRSRAAMVPVMVGD. The helical transmembrane segment at 147-167 threads the bilayer; the sequence is LLALALLYSAVGAAAEFGILG. Residues 168 to 189 lie on the Extracellular side of the membrane; the sequence is ERGNSHVRWAKVCNVYGRFCDR. Residues 190-210 traverse the membrane as a helical segment; that stretch reads AMAAVIVSLIGAFANLVLLML. The Cytoplasmic portion of the chain corresponds to 211–222; sequence NILTIHKSSSYY.

The protein belongs to the Casparian strip membrane proteins (CASP) family. In terms of assembly, homodimer and heterodimers.

The protein localises to the cell membrane. The protein is CASP-like protein 1E1 of Sorghum bicolor (Sorghum).